Reading from the N-terminus, the 67-residue chain is ATP synthase F(0) complex subunit 8 (67 aa).

A helical membrane pass occupies residues 8–24; sequence TWFITILSMLITLFILF. At lysine 54 the chain carries N6-acetyllysine; alternate. An N6-succinyllysine; alternate modification is found at lysine 54. Residue lysine 57 is modified to N6-acetyllysine.

This sequence belongs to the ATPase protein 8 family. In terms of assembly, component of the ATP synthase complex composed at least of ATP5F1A/subunit alpha, ATP5F1B/subunit beta, ATP5MC1/subunit c (homooctomer), MT-ATP6/subunit a, MT-ATP8/subunit 8, ATP5ME/subunit e, ATP5MF/subunit f, ATP5MG/subunit g, ATP5MK/subunit k, ATP5MJ/subunit j, ATP5F1C/subunit gamma, ATP5F1D/subunit delta, ATP5F1E/subunit epsilon, ATP5PF/subunit F6, ATP5PB/subunit b, ATP5PD/subunit d, ATP5PO/subunit OSCP. ATP synthase complex consists of a soluble F(1) head domain (subunits alpha(3) and beta(3)) - the catalytic core - and a membrane F(0) domain - the membrane proton channel (subunits c, a, 8, e, f, g, k and j). These two domains are linked by a central stalk (subunits gamma, delta, and epsilon) rotating inside the F1 region and a stationary peripheral stalk (subunits F6, b, d, and OSCP). Interacts with PRICKLE3.

It localises to the mitochondrion membrane. Functionally, subunit 8, of the mitochondrial membrane ATP synthase complex (F(1)F(0) ATP synthase or Complex V) that produces ATP from ADP in the presence of a proton gradient across the membrane which is generated by electron transport complexes of the respiratory chain. ATP synthase complex consist of a soluble F(1) head domain - the catalytic core - and a membrane F(1) domain - the membrane proton channel. These two domains are linked by a central stalk rotating inside the F(1) region and a stationary peripheral stalk. During catalysis, ATP synthesis in the catalytic domain of F(1) is coupled via a rotary mechanism of the central stalk subunits to proton translocation. In vivo, can only synthesize ATP although its ATP hydrolase activity can be activated artificially in vitro. Part of the complex F(0) domain. This chain is ATP synthase F(0) complex subunit 8, found in Dugong dugon (Dugong).